Here is a 207-residue protein sequence, read N- to C-terminus: D-aminoacyl-tRNA deacylase 1 (207 aa).

The Gly-cisPro motif, important for rejection of L-amino acids motif lies at 139–140; that stretch reads GP. The segment at 142-207 is disordered; sequence TIQLESPPAP…EGDVSSEREP (66 aa). Basic and acidic residues-rich tracts occupy residues 156–167 and 178–189; these read LLSKQEKQQQRK and SSREKAAQRSKV.

It belongs to the DTD family. In terms of assembly, homodimer.

Its subcellular location is the cytoplasm. It catalyses the reaction a D-aminoacyl-tRNA + H2O = a tRNA + a D-alpha-amino acid + H(+). The catalysed reaction is glycyl-tRNA(Ala) + H2O = tRNA(Ala) + glycine + H(+). D-aminoacyl-tRNA deacylase, with no observable activity on tRNAs charged with their cognate L-amino acid. Hydrolyzes correctly charged, achiral, glycyl-tRNA(Gly). Deacylates mischarged D.melanogaster and E.coli glycyl-tRNA(Ala), protecting cells against glycine mischarging by AlaRS. Acts via tRNA-based rather than protein-based catalysis; rejects L-amino acids rather than detecting D-amino acids in the active site. By recycling D-aminoacyl-tRNA to D-amino acids and free tRNA molecules, this enzyme counteracts the toxicity associated with the formation of D-aminoacyl-tRNA entities in vivo and helps enforce protein L-homochirality. This Danio rerio (Zebrafish) protein is D-aminoacyl-tRNA deacylase 1.